Reading from the N-terminus, the 89-residue chain is Small ribosomal subunit protein uS15 (89 aa).

It belongs to the universal ribosomal protein uS15 family. As to quaternary structure, part of the 30S ribosomal subunit. Forms a bridge to the 50S subunit in the 70S ribosome, contacting the 23S rRNA.

One of the primary rRNA binding proteins, it binds directly to 16S rRNA where it helps nucleate assembly of the platform of the 30S subunit by binding and bridging several RNA helices of the 16S rRNA. In terms of biological role, forms an intersubunit bridge (bridge B4) with the 23S rRNA of the 50S subunit in the ribosome. In Mycobacteroides abscessus (strain ATCC 19977 / DSM 44196 / CCUG 20993 / CIP 104536 / JCM 13569 / NCTC 13031 / TMC 1543 / L948) (Mycobacterium abscessus), this protein is Small ribosomal subunit protein uS15.